A 1415-amino-acid polypeptide reads, in one-letter code: DNA-directed RNA polymerase subunit beta' (1415 aa).

Zn(2+)-binding residues include C72, C74, C87, and C90. Mg(2+) contacts are provided by D463, D465, and D467. C811, C885, C892, and C895 together coordinate Zn(2+).

The protein belongs to the RNA polymerase beta' chain family. As to quaternary structure, the RNAP catalytic core consists of 2 alpha, 1 beta, 1 beta' and 1 omega subunit. When a sigma factor is associated with the core the holoenzyme is formed, which can initiate transcription. Requires Mg(2+) as cofactor. Zn(2+) is required as a cofactor.

The enzyme catalyses RNA(n) + a ribonucleoside 5'-triphosphate = RNA(n+1) + diphosphate. Its function is as follows. DNA-dependent RNA polymerase catalyzes the transcription of DNA into RNA using the four ribonucleoside triphosphates as substrates. This Cereibacter sphaeroides (strain ATCC 17023 / DSM 158 / JCM 6121 / CCUG 31486 / LMG 2827 / NBRC 12203 / NCIMB 8253 / ATH 2.4.1.) (Rhodobacter sphaeroides) protein is DNA-directed RNA polymerase subunit beta'.